Reading from the N-terminus, the 269-residue chain is Putative imidazole glycerol phosphate synthase subunit hisF2 (269 aa).

Aspartate 133 is an active-site residue.

This sequence belongs to the HisA/HisF family. As to quaternary structure, heterodimer of HisH and HisF.

Its subcellular location is the cytoplasm. It catalyses the reaction 5-[(5-phospho-1-deoxy-D-ribulos-1-ylimino)methylamino]-1-(5-phospho-beta-D-ribosyl)imidazole-4-carboxamide + L-glutamine = D-erythro-1-(imidazol-4-yl)glycerol 3-phosphate + 5-amino-1-(5-phospho-beta-D-ribosyl)imidazole-4-carboxamide + L-glutamate + H(+). The protein operates within amino-acid biosynthesis; L-histidine biosynthesis; L-histidine from 5-phospho-alpha-D-ribose 1-diphosphate: step 5/9. In terms of biological role, IGPS catalyzes the conversion of PRFAR and glutamine to IGP, AICAR and glutamate. The HisF subunit catalyzes the cyclization activity that produces IGP and AICAR from PRFAR using the ammonia provided by the HisH subunit. The chain is Putative imidazole glycerol phosphate synthase subunit hisF2 (hisF2) from Parasynechococcus marenigrum (strain WH8102).